A 158-amino-acid chain; its full sequence is Transcription elongation factor GreA (158 aa).

Residues 47–68 (AEYDAAKEAQGLLEMRIAKLEE) adopt a coiled-coil conformation.

It belongs to the GreA/GreB family.

Its function is as follows. Necessary for efficient RNA polymerase transcription elongation past template-encoded arresting sites. The arresting sites in DNA have the property of trapping a certain fraction of elongating RNA polymerases that pass through, resulting in locked ternary complexes. Cleavage of the nascent transcript by cleavage factors such as GreA or GreB allows the resumption of elongation from the new 3'terminus. GreA releases sequences of 2 to 3 nucleotides. The protein is Transcription elongation factor GreA of Flavobacterium johnsoniae (strain ATCC 17061 / DSM 2064 / JCM 8514 / BCRC 14874 / CCUG 350202 / NBRC 14942 / NCIMB 11054 / UW101) (Cytophaga johnsonae).